The primary structure comprises 262 residues: NADP-dependent mannitol dehydrogenase (262 aa).

Residues I23, D69, N96, and R129 each coordinate NADP(+). S149 acts as the Proton donor in catalysis. Positions 169, 173, 202, 204, and 206 each coordinate NADP(+). Catalysis depends on Y169, which acts as the Proton acceptor. Residue K173 is the Lowers pKa of active site Tyr of the active site.

This sequence belongs to the short-chain dehydrogenases/reductases (SDR) family. Homotetramer.

The catalysed reaction is D-mannitol + NADP(+) = D-fructose + NADPH + H(+). The polypeptide is NADP-dependent mannitol dehydrogenase (mtdH) (Agaricus bisporus (White button mushroom)).